Consider the following 357-residue polypeptide: Actin, cytoplasmic (357 aa).

This sequence belongs to the actin family. In terms of processing, met-1 may be removed after translation.

The protein resides in the cytoplasm. The protein localises to the cytoskeleton. It catalyses the reaction ATP + H2O = ADP + phosphate + H(+). Actins are highly conserved proteins that are involved in various types of cell motility and are ubiquitously expressed in all eukaryotic cells. The protein is Actin, cytoplasmic of Oxytricha fallax.